We begin with the raw amino-acid sequence, 1043 residues long: Isoleucine--tRNA ligase (1043 aa).

Positions 48 to 58 match the 'HIGH' region motif; sequence PFATGLPHYGH. The 'KMSKS' region signature appears at 591 to 595; the sequence is KMSKR. Lysine 594 contacts ATP.

It belongs to the class-I aminoacyl-tRNA synthetase family. IleS type 2 subfamily. In terms of assembly, monomer. Zn(2+) serves as cofactor.

Its subcellular location is the cytoplasm. The enzyme catalyses tRNA(Ile) + L-isoleucine + ATP = L-isoleucyl-tRNA(Ile) + AMP + diphosphate. In terms of biological role, catalyzes the attachment of isoleucine to tRNA(Ile). As IleRS can inadvertently accommodate and process structurally similar amino acids such as valine, to avoid such errors it has two additional distinct tRNA(Ile)-dependent editing activities. One activity is designated as 'pretransfer' editing and involves the hydrolysis of activated Val-AMP. The other activity is designated 'posttransfer' editing and involves deacylation of mischarged Val-tRNA(Ile). This is Isoleucine--tRNA ligase from Chlamydia pneumoniae (Chlamydophila pneumoniae).